The chain runs to 264 residues: LIMR family protein SELMODRAFT_416716 (264 aa).

The next 4 helical transmembrane spans lie at 23–43 (VVIL…VIGY), 96–116 (ILFT…LIFA), 194–214 (IIWL…FPFL), and 225–245 (WGLL…MSVI).

Belongs to the LIMR family.

It localises to the membrane. This chain is LIMR family protein SELMODRAFT_416716, found in Selaginella moellendorffii (Spikemoss).